The primary structure comprises 1481 residues: Cystic fibrosis transmembrane conductance regulator (1481 aa).

The Cytoplasmic segment spans residues 1–77 (MQRSPLEKAS…KLINALRRCF (77 aa)). A helical transmembrane segment spans residues 78–98 (FWRFMFYGILLYLGEVTKAVQ). Residues 81 to 365 (FMFYGILLYL…WAVQTWYDSL (285 aa)) enclose the ABC transmembrane type-1 1 domain. Residues 99–122 (PLLLGRIIASYDPDNKEERSIAIY) lie on the Extracellular side of the membrane. The helical transmembrane segment at 123–146 (LGIGLCLLFIVRTLLLHPAIFGLH) threads the bilayer. Topologically, residues 147-195 (HIGMQMRIAMFSLIYKKTLKLSSRVLDKISIGQLVSLLSNNLNKFDEGL) are cytoplasmic. Residues 196-216 (ALAHFVWIVPLQVALLMGLIW) traverse the membrane as a helical segment. Topologically, residues 217-222 (ELLQAS) are extracellular. A helical transmembrane segment spans residues 223-243 (AFCGLGFLIVLALFQAGLGRM). Residues 244-298 (MMKYRDQRAGKINERLVITSEMIENIQSVKAYCWEEAMEKMIENLRQTELKLTRK) lie on the Cytoplasmic side of the membrane. Residues 299–319 (AAYVRYFNSSAFFFSGFFVVF) traverse the membrane as a helical segment. The Extracellular segment spans residues 320–339 (LSVLPYALIKGIVLRKIFTT). The helical transmembrane segment at 340 to 358 (ISFCIVLRMAVTRQFPWAV) threads the bilayer. At 359–858 (QTWYDSLGAI…YLRYITVHKS (500 aa)) the chain is on the cytoplasmic side. ATP contacts are provided by residues W401, S434, 458–465 (GSTGAGKT), and Q493. The 224-residue stretch at 423–646 (NDDDSLFFSN…RPDFSSKLMG (224 aa)) folds into the ABC transporter 1 domain. C524 carries S-palmitoyl cysteine lipidation. 2 positions are modified to phosphoserine: S549 and S660. The segment at 654–831 (SAERRNSILT…EEINEEDLKE (178 aa)) is disordered R region. S670 bears the Phosphoserine; by PKA mark. S686 is modified (phosphoserine). A Glycyl lysine isopeptide (Lys-Gly) (interchain with G-Cter in ubiquitin) cross-link involves residue K688. Residues S700 and S712 each carry the phosphoserine modification. T717 carries the post-translational modification Phosphothreonine. Phosphoserine occurs at positions 737, 753, 768, 790, 795, and 813. Residues 859 to 879 (LIFVLIWCLVIFLAEVAASLV) traverse the membrane as a helical segment. The region spanning 859–1155 (LIFVLIWCLV…AVNSSIDVDS (297 aa)) is the ABC transmembrane type-1 2 domain. At 880–918 (VLWFLGNTPPQDKGNSTYSRNNSYAVIITRTSSYYVFYI) the chain is on the extracellular side. Residues N894 and N900 are each glycosylated (N-linked (GlcNAc...) asparagine). A discontinuously helical membrane pass occupies residues 919–939 (YVGVADTLLAMGFFRGLPLVH). The Cytoplasmic segment spans residues 940-990 (TLITVSKILHHKMLHSVLQAPMSTLNTLKAGGILNRFSKDIAILDDLLPLT). Residues 991 to 1011 (IFDFIQLLLIVIGAIAVVAVL) traverse the membrane as a helical segment. Residues 1012 to 1013 (QP) are Extracellular-facing. The chain crosses the membrane as a helical span at residues 1014–1034 (YIFVATVPVIVAFIMLRAYFL). The Cytoplasmic segment spans residues 1035-1095 (QTSQQLKQLE…TANWFLYLST (61 aa)). A helical membrane pass occupies residues 1096–1116 (LRWFQMRIEMIFVIFFIAVTF). The Extracellular portion of the chain corresponds to 1117–1130 (ISILTTGEGEGTVG). A helical transmembrane segment spans residues 1131–1151 (IILTLAMNIMSTLQWAVNSSI). At 1152-1481 (DVDSLMRSVS…TEEEVQDTRL (330 aa)) the chain is on the cytoplasmic side. Residues 1211–1444 (MTVKDLTAKY…RSLFRQAISP (234 aa)) form the ABC transporter 2 domain. ATP-binding positions include Y1220 and 1245-1252 (GRTGSGKS). Positions 1387 to 1481 (RTLKQAFADC…TEEEVQDTRL (95 aa)) are interaction with GORASP2. The S-palmitoyl cysteine moiety is linked to residue C1396. Phosphoserine is present on residues S1445 and S1457. Residues 1462–1481 (QPQIAALKEETEEEVQDTRL) form a disordered region. Residues 1471-1481 (ETEEEVQDTRL) show a composition bias toward acidic residues. The short motif at 1479–1481 (TRL) is the PDZ-binding element.

The protein belongs to the ABC transporter superfamily. ABCC family. CFTR transporter (TC 3.A.1.202) subfamily. As to quaternary structure, monomer; does not require oligomerization for channel activity. May form oligomers in the membrane. Interacts with SLC26A3, SLC26A6 and NHERF1. Interacts with SHANK2. Interacts with MYO6. Interacts (via C-terminus) with GOPC (via PDZ domain); this promotes CFTR internalization and thereby decreases channel activity. Interacts with SLC4A7 through NHERF1. Found in a complex with MYO5B and RAB11A. Interacts with ANO1. Interacts with SLC26A8. Interacts with AHCYL1; the interaction increases CFTR activity. Interacts with CSE1L. The core-glycosylated form interacts with GORASP2 (via PDZ GRASP-type 1 domain) in respone to ER stress. Interacts with MARCHF2; the interaction leads to CFTR ubiqtuitination and degradation. Interacts with ADGRG2. N-glycosylated. Post-translationally, phosphorylated; cAMP treatment promotes phosphorylation and activates the channel. Dephosphorylation decreases the ATPase activity (in vitro). Phosphorylation at PKA sites activates the channel. Phosphorylation at PKC sites enhances the response to phosphorylation by PKA. Phosphorylated by AMPK; this inhibits channel activity. In terms of processing, ubiquitinated, leading to its degradation in the lysosome. Deubiquitination by USP10 in early endosomes enhances its endocytic recycling to the cell membrane. Ubiquitinated by RNF185 during ER stress. Ubiquitinated by MARCHF2.

Its subcellular location is the apical cell membrane. The protein resides in the early endosome membrane. It localises to the cell membrane. The protein localises to the recycling endosome membrane. It is found in the endoplasmic reticulum membrane. Its subcellular location is the nucleus. It carries out the reaction ATP + H2O + closed Cl(-) channel = ADP + phosphate + open Cl(-) channel.. It catalyses the reaction chloride(in) = chloride(out). The enzyme catalyses hydrogencarbonate(in) = hydrogencarbonate(out). The catalysed reaction is ATP + H2O = ADP + phosphate + H(+). Its function is as follows. Epithelial ion channel that plays an important role in the regulation of epithelial ion and water transport and fluid homeostasis. Mediates the transport of chloride ions across the cell membrane. Possesses an intrinsic ATPase activity and utilizes ATP to gate its channel; the passive flow of anions through the channel is gated by cycles of ATP binding and hydrolysis by the ATP-binding domains. The ion channel is also permeable to HCO(3)(-); selectivity depends on the extracellular chloride concentration. Exerts its function also by modulating the activity of other ion channels and transporters. Contributes to the regulation of the pH and the ion content of the epithelial fluid layer. Modulates the activity of the epithelial sodium channel (ENaC) complex, in part by regulating the cell surface expression of the ENaC complex. May regulate bicarbonate secretion and salvage in epithelial cells by regulating the transporter SLC4A7. Can inhibit the chloride channel activity of ANO1. Plays a role in the chloride and bicarbonate homeostasis during sperm epididymal maturation and capacitation. The sequence is that of Cystic fibrosis transmembrane conductance regulator from Chlorocebus aethiops (Green monkey).